A 258-amino-acid chain; its full sequence is uncharacterized protein (258 aa).

Transmembrane regions (helical) follow at residues 38 to 58 (VFGLLIALICFSNVLCFLFIA), 72 to 92 (ALIFTLFIPFVTSLLANIIFI), and 111 to 131 (FLVICAFSSLPIVNIWLMLWW).

The protein resides in the cell membrane. This is an uncharacterized protein from Mycoplasma pneumoniae (strain ATCC 29342 / M129 / Subtype 1) (Mycoplasmoides pneumoniae).